The following is a 24-amino-acid chain: Coenzyme PQQ synthesis protein A (24 aa).

The segment at residues 16–20 (EITMY) is a cross-link (pyrroloquinoline quinone (Glu-Tyr)).

Belongs to the PqqA family.

The protein operates within cofactor biosynthesis; pyrroloquinoline quinone biosynthesis. In terms of biological role, required for coenzyme pyrroloquinoline quinone (PQQ) biosynthesis. PQQ is probably formed by cross-linking a specific glutamate to a specific tyrosine residue and excising these residues from the peptide. The sequence is that of Coenzyme PQQ synthesis protein A from Variovorax paradoxus (strain S110).